Here is a 135-residue protein sequence, read N- to C-terminus: Transcription antitermination protein NusB (135 aa).

The protein belongs to the NusB family.

Functionally, involved in transcription antitermination. Required for transcription of ribosomal RNA (rRNA) genes. Binds specifically to the boxA antiterminator sequence of the ribosomal RNA (rrn) operons. The sequence is that of Transcription antitermination protein NusB from Lacticaseibacillus casei (strain BL23) (Lactobacillus casei).